Here is a 147-residue protein sequence, read N- to C-terminus: Methylglyoxal synthase (147 aa).

An MGS-like domain is found at 1 to 147; it reads MKGQRNIGMV…TPYVKRLGAK (147 aa). Substrate contacts are provided by residues His12, Lys16, 38-41, and 59-60; these read TGTT and SG. Asp65 functions as the Proton donor/acceptor in the catalytic mechanism. His92 is a binding site for substrate.

This sequence belongs to the methylglyoxal synthase family.

The enzyme catalyses dihydroxyacetone phosphate = methylglyoxal + phosphate. In terms of biological role, catalyzes the formation of methylglyoxal from dihydroxyacetone phosphate. This chain is Methylglyoxal synthase, found in Oleidesulfovibrio alaskensis (strain ATCC BAA-1058 / DSM 17464 / G20) (Desulfovibrio alaskensis).